Here is a 466-residue protein sequence, read N- to C-terminus: tRNA modification GTPase MnmE (466 aa).

(6S)-5-formyl-5,6,7,8-tetrahydrofolate is bound by residues arginine 22, glutamate 87, and arginine 126. Residues 222-382 form the TrmE-type G domain; the sequence is GWRTVIVGRP…LTELIRRMVY (161 aa). Position 232 (asparagine 232) interacts with K(+). GTP contacts are provided by residues 232–237, 251–257, and 276–279; these read NVGKSS, TEIPGTT, and DTAG. A Mg(2+)-binding site is contributed by serine 236. Threonine 251, isoleucine 253, and threonine 256 together coordinate K(+). Mg(2+) is bound at residue threonine 257. Position 466 (lysine 466) interacts with (6S)-5-formyl-5,6,7,8-tetrahydrofolate.

This sequence belongs to the TRAFAC class TrmE-Era-EngA-EngB-Septin-like GTPase superfamily. TrmE GTPase family. In terms of assembly, homodimer. Heterotetramer of two MnmE and two MnmG subunits. K(+) serves as cofactor.

The protein localises to the cytoplasm. Functionally, exhibits a very high intrinsic GTPase hydrolysis rate. Involved in the addition of a carboxymethylaminomethyl (cmnm) group at the wobble position (U34) of certain tRNAs, forming tRNA-cmnm(5)s(2)U34. This Heliobacterium modesticaldum (strain ATCC 51547 / Ice1) protein is tRNA modification GTPase MnmE.